Reading from the N-terminus, the 297-residue chain is T-cell leukemia homeobox protein 1 (297 aa).

The segment at 153-174 is disordered; sequence DRFTGHPYQNRTPPKKKKPRTS. A DNA-binding region (homeobox) is located at residues 168–227; that stretch reads KKKPRTSFTRLQICELEKRFHRQKYLASAERAALAKALKMTDAQVKTWFQNRRTKWRRQT.

Its subcellular location is the nucleus. Functionally, seems to be involved in the development of cranial sensory innervation from peripheral ganglia. This Gallus gallus (Chicken) protein is T-cell leukemia homeobox protein 1 (TLX1).